We begin with the raw amino-acid sequence, 303 residues long: MGLDIQTEIDKIVIEKVKPEVEYYDVMGGSHRWEVKVHDHGKVALVDTMPRLAPVGQTADFSICQAARVSYGAGTKKVTEDKGLIRYLYRHQHTSPFEMVEFKFHCVMPVFIARQWIRHRTANVNEYSARYSVLPDKFYHPSIEEVRKQSTSNRQGGEEALEPKTAQEFLDYLDKVEENYKTYNELLEKGLSRELGRIGLPVSIYTEWYWKIDLHNLFHFLRLRMDSHSQKEIRDYANTIFALIRPIVPVACEAFIDYAFESLKLTRLEIEAIRTGSPLNTTNKREIEEFEEKKKLLFPNTQA.

One can recognise a ThyX domain in the interval 41-258 (GKVALVDTMP…PVACEAFIDY (218 aa)). FAD contacts are provided by residues S95, 118–120 (RHR), and E126. DUMP-binding positions include 115 to 118 (QWIR), 126 to 130 (EYSAR), and R197. Residues 118 to 128 (RHRTANVNEYS) carry the ThyX motif motif. FAD-binding positions include 213–215 (DLH) and H219. Residue R224 participates in dUMP binding. R224 serves as the catalytic Involved in ionization of N3 of dUMP, leading to its activation.

It belongs to the thymidylate synthase ThyX family. In terms of assembly, homotetramer. Requires FAD as cofactor.

The enzyme catalyses dUMP + (6R)-5,10-methylene-5,6,7,8-tetrahydrofolate + NADPH + H(+) = dTMP + (6S)-5,6,7,8-tetrahydrofolate + NADP(+). It participates in pyrimidine metabolism; dTTP biosynthesis. Catalyzes the reductive methylation of 2'-deoxyuridine-5'-monophosphate (dUMP) to 2'-deoxythymidine-5'-monophosphate (dTMP) while utilizing 5,10-methylenetetrahydrofolate (mTHF) as the methyl donor, and NADPH and FADH(2) as the reductant. This chain is Flavin-dependent thymidylate synthase (thyA), found in Dictyostelium discoideum (Social amoeba).